Here is a 484-residue protein sequence, read N- to C-terminus: MALTQRLEFRQSQSLVMSPQLMQAIKLLQLSNLDLMTFVEEELECNPLLERASDDAAGAEAPTEVDQVSGDQLAEAQVRDARDGAMTTYTEWGGGGSGDEDYNLEAFVASETTLSDHLAEQLSVAFTAPAQRMIGQYLIDLVDEAGYLPPDLGQAAERLGATQEDVEHVLAVLQEFDPPGVCARNLRECLAIQLRELDRYDPAMQALVEHLDLLAKRDIASLRKLCGVDDEDIADMIDELRRLSPKPGMKFGSARLQTMVPDVYVRPAPDGGWHVELNSDTLPRVLVNQTYYSKLSKKIGKDVDKSYFNDALQNATWLVRALDQRARTILKVATEIVRQQDGFFTLGVAHLRPLNLKAVAEAIQMHESTVSRVTANKYMATNRGTFELKYFFTASIPSADGGEAHSAEAVRHRIKQLIESEEPSAVLSDDAIVERLRVSGIDIARRTVAKYREAMRIRSSVQRRRDNMWSTMNSRASGGTGLDK.

A DNA-binding region (H-T-H motif) is located at residues 355–374 (NLKAVAEAIQMHESTVSRVT). An RPON box motif is present at residues 444–452 (ARRTVAKYR). The disordered stretch occupies residues 464 to 484 (RRDNMWSTMNSRASGGTGLDK). Residues 468-477 (MWSTMNSRAS) show a composition bias toward polar residues.

It belongs to the sigma-54 factor family.

Sigma factors are initiation factors that promote the attachment of RNA polymerase to specific initiation sites and are then released. This sigma factor is responsible for the expression of the nitrogen fixation genes. The polypeptide is RNA polymerase sigma-54 factor 1 (rpoN1) (Bradyrhizobium diazoefficiens (strain JCM 10833 / BCRC 13528 / IAM 13628 / NBRC 14792 / USDA 110)).